A 78-amino-acid chain; its full sequence is Dihydrofolate reductase type 2 (78 aa).

NADP(+) is bound by residues 32–36 (KKSGA) and 66–69 (VQIY). Isoleucine 68 is a binding site for substrate.

As to quaternary structure, homotetramer.

The enzyme catalyses (6S)-5,6,7,8-tetrahydrofolate + NADP(+) = 7,8-dihydrofolate + NADPH + H(+). Its pathway is cofactor biosynthesis; tetrahydrofolate biosynthesis; 5,6,7,8-tetrahydrofolate from 7,8-dihydrofolate: step 1/1. Key enzyme in folate metabolism. Catalyzes an essential reaction for de novo glycine and purine synthesis, and for DNA precursor synthesis. In Escherichia coli, this protein is Dihydrofolate reductase type 2.